The primary structure comprises 413 residues: Alpha-1-antitrypsin-like protein GS55-LT (413 aa).

A signal peptide spans methionine 1–glycine 21. 3 N-linked (GlcNAc...) asparagine glycosylation sites follow: asparagine 65, asparagine 102, and asparagine 123. The RCL stretch occupies residues arginine 368–arginine 387.

This sequence belongs to the serpin family.

The protein resides in the secreted. Functionally, inhibitor of serine proteases. This Ictidomys tridecemlineatus (Thirteen-lined ground squirrel) protein is Alpha-1-antitrypsin-like protein GS55-LT.